A 483-amino-acid polypeptide reads, in one-letter code: Protein nucleotidyltransferase YdiU (483 aa).

8 residues coordinate ATP: G87, G89, R90, K110, D122, G123, R173, and R180. D249 (proton acceptor) is an active-site residue. The Mg(2+) site is built by N250 and D259. D259 is an ATP binding site.

Belongs to the SELO family. Mg(2+) serves as cofactor. It depends on Mn(2+) as a cofactor.

It catalyses the reaction L-seryl-[protein] + ATP = 3-O-(5'-adenylyl)-L-seryl-[protein] + diphosphate. The catalysed reaction is L-threonyl-[protein] + ATP = 3-O-(5'-adenylyl)-L-threonyl-[protein] + diphosphate. The enzyme catalyses L-tyrosyl-[protein] + ATP = O-(5'-adenylyl)-L-tyrosyl-[protein] + diphosphate. It carries out the reaction L-histidyl-[protein] + UTP = N(tele)-(5'-uridylyl)-L-histidyl-[protein] + diphosphate. It catalyses the reaction L-seryl-[protein] + UTP = O-(5'-uridylyl)-L-seryl-[protein] + diphosphate. The catalysed reaction is L-tyrosyl-[protein] + UTP = O-(5'-uridylyl)-L-tyrosyl-[protein] + diphosphate. In terms of biological role, nucleotidyltransferase involved in the post-translational modification of proteins. It can catalyze the addition of adenosine monophosphate (AMP) or uridine monophosphate (UMP) to a protein, resulting in modifications known as AMPylation and UMPylation. In Pectobacterium carotovorum subsp. carotovorum (strain PC1), this protein is Protein nucleotidyltransferase YdiU.